Here is a 122-residue protein sequence, read N- to C-terminus: Large ribosomal subunit protein uL14 (122 aa).

The protein belongs to the universal ribosomal protein uL14 family. Part of the 50S ribosomal subunit. Forms a cluster with proteins L3 and L19. In the 70S ribosome, L14 and L19 interact and together make contacts with the 16S rRNA in bridges B5 and B8.

Binds to 23S rRNA. Forms part of two intersubunit bridges in the 70S ribosome. The protein is Large ribosomal subunit protein uL14 of Corynebacterium aurimucosum (strain ATCC 700975 / DSM 44827 / CIP 107346 / CN-1) (Corynebacterium nigricans).